Here is a 681-residue protein sequence, read N- to C-terminus: Mitosis inhibitor nif1 (681 aa).

The tract at residues 22 to 43 (LNKKDGNDDDKAEHSKRSGYHG) is disordered. Basic and acidic residues predominate over residues 23–37 (NKKDGNDDDKAEHSK). At S70 the chain carries Phosphoserine. Disordered regions lie at residues 80–104 (TTSGSSSDLLNIESPASPAEASSPF) and 182–324 (YYHE…SSRQ). Residues 92 to 103 (ESPASPAEASSP) are compositionally biased toward low complexity. A compositionally biased stretch (polar residues) spans 191-203 (TASNTSPTPNSIK). S196 carries the phosphoserine modification. Residues 238 to 278 (SSGDSTPLSGSSSSKGMLMSMSTSENHSLSSNPELSNSNLL) are compositionally biased toward low complexity. Residues 296 to 306 (SSKEPDKEHST) are compositionally biased toward basic and acidic residues. Sel1-like repeat units follow at residues 547–582 (ALILYELGVCFMHGWGITRDRYLALHLIKLSGAWGD) and 583–618 (ADAQFEAGLQMSLGAVSDKDSHMAAYYYRLAGFQGI).

Its subcellular location is the cytoplasm. Functionally, functions as a negative regulator of mitosis. It interacts with the C-terminal of nim1, thereby inhibiting its kinase activity which phosphorylates wee1. The chain is Mitosis inhibitor nif1 (nif1) from Schizosaccharomyces pombe (strain 972 / ATCC 24843) (Fission yeast).